A 402-amino-acid polypeptide reads, in one-letter code: Candidapepsin-1 (402 aa).

The segment at residues 1 to 25 is a signal peptide (or 18, or 21); it reads MVAIVTLTRQVLLTIALALFAQGAA. The propeptide at 26–62 is activation peptide; the sequence is IPEEAAKRDDNPGFVALDFDVLRKPLNLTEALLREKR. N-linked (GlcNAc...) asparagine glycosylation occurs at Asn-52. In terms of domain architecture, Peptidase A1 spans 76-389; that stretch reads YASKVSVGSN…NLDANTISIA (314 aa). Residue Asp-94 is part of the active site. Cys-109 and Cys-115 are joined by a disulfide. Asp-282 is a catalytic residue. Cys-320 and Cys-354 are oxidised to a cystine.

This sequence belongs to the peptidase A1 family. Post-translationally, O-glycosylated.

It is found in the secreted. It catalyses the reaction Preferential cleavage at the carboxyl of hydrophobic amino acids, but fails to cleave 15-Leu-|-Tyr-16, 16-Tyr-|-Leu-17 and 24-Phe-|-Phe-25 of insulin B chain. Activates trypsinogen, and degrades keratin.. The chain is Candidapepsin-1 (SAPP1) from Candida parapsilosis (Yeast).